A 555-amino-acid polypeptide reads, in one-letter code: MDKRHDPSRRIIAPHGTQLSCKSWLTEAPMRMLMNNLHPDVAERPEDLVVYGGIGRAARDWDCYDKIIEVLQRLEDDETLLVQSGKPVGVFRTHADAPRVLIANSNLVPHWANWEHFNELDKLGLAMYGQMTAGSWIYIGTQGIVQGTYETFVSVAKQHFEGISKGKWILTGGLGGMGGAQTLAGTMAGFSVLACEVDETRIDFRLRTRYVDKKATSLDEALAMIEAANQAGKPVSVGLLANAADVFAELVKRGVTPDVVTDQTSAHDPLNGYLPQGWTMAEAAAMRKTDEAGVVKAAKASMAVQVQAMLNLQTAGAATLDYGNNIRQMAFEMGVENAFDFPGFVPAYIRPLFCEGIGPFRWVALSGDPEDIYKTDAKVKELIPDNPHLHNWLDMARERIAFQGLPARICWIGLKDRARLALAFNEMVKNGELSAPVVIGRDHLDSGSVASPNRETESMLDGSDAVSDWPLLNALLNTASGATWVSLHHGGGVGMGFSQHSGVVIVCDGTDAAAKRVGRVLWNDPATGVMRHADAGYEIAKNCAKEQGLDLPMQD.

NAD(+) is bound by residues 52–53 (GG), Q130, 176–178 (GMG), E196, R201, 242–243 (NA), 263–267 (QTSAH), 273–274 (YL), and Y322. C410 is a catalytic residue. NAD(+) is bound at residue G492.

This sequence belongs to the urocanase family. It depends on NAD(+) as a cofactor.

Its subcellular location is the cytoplasm. It carries out the reaction 4-imidazolone-5-propanoate = trans-urocanate + H2O. The protein operates within amino-acid degradation; L-histidine degradation into L-glutamate; N-formimidoyl-L-glutamate from L-histidine: step 2/3. Catalyzes the conversion of urocanate to 4-imidazolone-5-propionate. This is Urocanate hydratase from Shewanella sp. (strain W3-18-1).